Reading from the N-terminus, the 447-residue chain is Large ribosomal subunit protein bL27m (447 aa).

2 stretches are compositionally biased toward basic and acidic residues: residues 377 to 402 (QREA…KAEK) and 409 to 447 (KVEK…EKKD). Residues 377 to 447 (QREAKKAREG…KKDSKTEKKD (71 aa)) are disordered.

It belongs to the bacterial ribosomal protein bL27 family. Component of the mitochondrial large ribosomal subunit (mt-LSU). Mature N.crassa 74S mitochondrial ribosomes consist of a small (37S) and a large (54S) subunit. The 37S small subunit contains a 16S ribosomal RNA (16S mt-rRNA) and 32 different proteins. The 54S large subunit contains a 23S rRNA (23S mt-rRNA) and 42 different proteins.

Its subcellular location is the mitochondrion. Functionally, component of the mitochondrial ribosome (mitoribosome), a dedicated translation machinery responsible for the synthesis of mitochondrial genome-encoded proteins, including at least some of the essential transmembrane subunits of the mitochondrial respiratory chain. The mitoribosomes are attached to the mitochondrial inner membrane and translation products are cotranslationally integrated into the membrane. The polypeptide is Large ribosomal subunit protein bL27m (mrp7) (Neurospora crassa (strain ATCC 24698 / 74-OR23-1A / CBS 708.71 / DSM 1257 / FGSC 987)).